The following is a 423-amino-acid chain: Histidine--tRNA ligase (423 aa).

This sequence belongs to the class-II aminoacyl-tRNA synthetase family. Homodimer.

The protein localises to the cytoplasm. The enzyme catalyses tRNA(His) + L-histidine + ATP = L-histidyl-tRNA(His) + AMP + diphosphate + H(+). This chain is Histidine--tRNA ligase, found in Haemophilus ducreyi (strain 35000HP / ATCC 700724).